The following is a 599-amino-acid chain: MELPISFLSDSSRPAASSERGDQAALGRGELEFDEELVFLAAEGEGDPEEIEGPEVREQSELLCIIRQKEKDLVLAARLGKALLERNQDMSRRYEEMQREMTDKLEHLEQEKHELKRKLENREGEWEGRVSELESDVKLLQEELEKQQVNLREADREKLSVVQELSEQNQRLLEQLSRATEMERQLSQQVNVLQEEFREKSLSTSQHVSRLESLLAEIKMLSDRKRELEQQLSTIMEENEQLQGLVEELQDKELSLNQQNFGKDLQLRESQLEIEEMRLSYRQLEGKLEELREEKSLQHMNSTSTSLLSEIEQSIEAEEQEQEREQLRLQLWEAHCQVRSLCCQLRGNESADSAVSTDSSMDESSETSSAKDVPAGSLRTALSELKSLILSILETCDSASSRKCEDDGLEEQIKQTSEDSRALRELLQGEQMRMKQTFDELQELHKQVTLLSVEMNALKEERDRLLVLTQNDETQEQLMKAIKDRDEAISKKTAVELELAKCRIDLMSLNTQLLDAIQQKLNLSQQLEAWQDDMHRVIDQQLMDKHQKEWSQPAYSFSNSHHVKQCSKAAAMKHAERPGEESIGAEGRRLFSFLKKTKC.

The tract at residues 1–27 (MELPISFLSDSSRPAASSERGDQAALG) is disordered. A CC1 box motif is present at residues 76 to 80 (AARLG). The stretch at 80–341 (GKALLERNQD…WEAHCQVRSL (262 aa)) forms a coiled coil. The tract at residues 352–375 (DSAVSTDSSMDESSETSSAKDVPA) is disordered. The stretch at 405–536 (EDDGLEEQIK…LEAWQDDMHR (132 aa)) forms a coiled coil.

It belongs to the BICDR family. Part of a tripartite complex with dynein and dynactin, acts an adapter linking the dynein motor complex and dynactin. Interacts with KIF1C. Interacts with RAB6A and RAB6B; interaction is specific to Rab6.

Its subcellular location is the cytoplasm. The protein resides in the cytoskeleton. It is found in the microtubule organizing center. It localises to the centrosome. Acts as an adapter protein linking the dynein motor complex to various cargos and converts dynein from a non-processive to a highly processive motor in the presence of dynactin. Facilitates the interaction between dynein and dynactin and activates dynein processivity (the ability to move along a microtubule for a long distance without falling off the track). Predominantly recruits 2 dyneins, which increases both the force and speed of the microtubule motor. Component of secretory vesicle machinery in developing neurons that acts as a regulator of neurite outgrowth. Regulates the secretory vesicle transport by controlling the accumulation of Rab6-containing secretory vesicles in the pericentrosomal region restricting anterograde secretory transport during the early phase of neuronal differentiation, thereby inhibiting neuritogenesis. This Xenopus tropicalis (Western clawed frog) protein is BICD family-like cargo adapter 1 (bicdl1).